The primary structure comprises 304 residues: MWFKNLTLYRFNKPFSIETEALETALADFTFSPCGSQDVSKFGFSNALGKQGSTLVHSANNRHLICVTKEEKILPGQVIKESLEEKVAQIEDEENRKLAKKEKDALKDEIITSLLPRAFSRRSQTRALILPELEMILVDSSSATKAEELLALLRKALGSLPVIPLSFKAPVEANLTQWLKDGSAPLPFEMQDEAELKSAADEGGIVRFKQQDLKEDEVLAHLETGKEVHKLALHFGQSIALLLQSDASVKRLKFSEEFRAGNDELGNEDPMARLDADFALMGSELVALMHALVSALGGLEETQA.

The protein belongs to the RdgC family.

It is found in the cytoplasm. The protein localises to the nucleoid. Functionally, may be involved in recombination. This is Recombination-associated protein RdgC from Shewanella sp. (strain ANA-3).